The primary structure comprises 4558 residues: Multifunctional-autoprocessing repeats-in-toxin (4558 aa).

An N-terminal signal peptide occupies residues 1-32 (MVFYLIPKRRVWLMGKPFWRSVEYFFTGNYSA). 39 RtxA repeats span residues 114–131 (GAAG…GDVS), 134–151 (GAAA…GNVT), 154–170 (GAGG…QGNL), 174–197 (GAGA…GDVT), 200–217 (GAGA…GNIT), 220–237 (GAGA…GDIT), 268–285 (GVGG…GDIH), 288–304 (GGGA…GNDF), 594–611 (GAGG…GNVH), 614–630 (GGGI…FGNT), 634–651 (GGGA…GDLT), 654–668 (GAGL…SEQG), 751–763 (AGGA…MGEG), 769–781 (MLGG…HISN), 792–808 (ALGG…GNTL), 811–826 (MGGG…DGTT), 830–845 (MVGG…NGDT), 851–865 (GVGN…GQTL), 868–885 (MGAA…TSIA), 887–901 (MIGA…GEGN), 906–920 (MGGL…GNGD), 925–942 (MVAE…MSVA), 944–960 (MLAK…GTTL), 982–994 (MIGQ…KVGN), 1001–1016 (MVGK…DGTS), 1041–1053 (GKAN…GDGL), 1077–1089 (AAAK…HVGD), 1097–1112 (AGKG…GTTV), 1120–1132 (GNVM…GTTI), 1135–1152 (AKGK…LGVN), 1155–1169 (WGQA…DGDR), 1173–1189 (AKGE…GQEV), 1194–1209 (GEAN…DDYT), 1211–1227 (AWGK…GQNV), 1230–1246 (AKGE…GDSF), 1252–1266 (KGNI…MQVT), 1268–1285 (AKGQ…LNVT), 1306–1323 (AWGK…LNVA), and 1325–1342 (MKGK…LNIN). Disordered stretches follow at residues 1623 to 1688 (HATQ…KEES), 1752 to 1779 (TLSD…QNRA), and 1791 to 1890 (DAEK…NADG). Polar residues predominate over residues 1625-1634 (TQNPAAQNAL). The span at 1635-1654 (SDKERAEADRQRLEQEKQKQ) shows a compositional bias: basic and acidic residues. A compositionally biased stretch (polar residues) spans 1660-1679 (GSQSQLESTDQQALENNGQA). Over residues 1791–1815 (DAEKRKADALAKGKDAQQAESDAHH) the composition is skewed to basic and acidic residues. Residues 1879–1888 (HVNTDSQTNA) show a composition bias toward polar residues. In terms of domain architecture, ACD spans 1988-2422 (VPGFKSHFAS…HAEQWAKITA (435 aa)). Residue 1999–2003 (SIGIE) coordinates ATP. Positions 2003, 2065, and 2149 each coordinate Mg(2+). An ATP-binding site is contributed by Arg-2255. Glu-2326 is a binding site for Mg(2+). Residues 2574–2658 (ELMSVTELLD…SLLNQVNTRL (85 aa)) form a membrane localization region (MLD) region. Residues 2734–3098 (EYGQTVADTI…HQVTDVLDAL (365 aa)) are rho inactivation domain (RID). Positions 3195 to 3310 (VVLFLHGSGS…MPSMTKAITA (116 aa)) are ABH effector region. Positions 3404-3426 (ASVDEDLDQQGLDTTSTKDQGIS) are disordered. Over residues 3414-3426 (GLDTTSTKDQGIS) the composition is skewed to polar residues. The 185-residue stretch at 3462 to 3646 (PTTDGGETRF…AENNKVSLSW (185 aa)) folds into the Peptidase C80 domain. 1D-myo-inositol hexakisphosphate is bound by residues 3468–3470 (ETR), 3495–3496 (KH), and Arg-3526. Residue His-3532 is the For cysteine protease activity of the active site. Position 3577 (Ser-3577) interacts with 1D-myo-inositol hexakisphosphate. The active-site Nucleophile; for cysteine protease activity is the Cys-3581. Residues 3610 to 3612 (SVR), 3623 to 3624 (RK), Lys-3636, and Lys-3641 contribute to the 1D-myo-inositol hexakisphosphate site.

Mg(2+) is required as a cofactor.

Its subcellular location is the secreted. It is found in the host cytoplasm. The protein resides in the host cytosol. The protein localises to the host cell membrane. It catalyses the reaction L-lysyl-/S-(2E,6E,10E)-geranylgeranyl-L-cysteinyl-[protein] + hexadecanoyl-CoA = N(6)-hexadecanoyl-L-lysyl-/S-(2E,6E,10E)-geranylgeranyl-L-cysteinyl-[protein] + CoA + H(+). The catalysed reaction is L-lysyl-/S-(2E,6E,10E)-geranylgeranyl-L-cysteinyl-[protein] + dodecanoyl-CoA = N(6)-dodecanoyl-L-lysyl-/S-(2E,6E,10E)-geranylgeranyl-L-cysteinyl-[protein] + CoA + H(+). It carries out the reaction L-lysyl-/S-(2E,6E,10E)-geranylgeranyl-L-cysteinyl-[protein] + decanoyl-CoA = N(6)-decanoyl-L-lysyl-/S-(2E,6E,10E)-geranylgeranyl-L-cysteinyl-[protein] + CoA + H(+). Protease activity is inhibited by N-ethylmaleimide but not other protease inhibitors. Protease activity is inhibited by aza-leucine epoxide. Protease activity is activated upon binding inositol hexakisphosphate (InsP6) via an allosteric mechanism: the active site is disordered or occluded in the absence of InsP6, protecting the protease active-site sulfhydryl until the toxin enters a eukaryotic cell. Upon processing at the Leu-3441-Ala-3442 site, the peptidase C80 domain is converted to a form with much reduced affinity for InsP6, but is reactivated for high affinity binding of InsP6 by cooperative binding of both a new substrate and InsP6. Reactivation allows cleavage at other sites, specifically at Leu residues between the effector domains. Functionally, precursor of a multifunctional toxin that causes destruction of the actin cytoskeleton by covalent cross-linking of actin and inactivation of Rho GTPases when translocated into the host cytoplasm. Upon translocation into the host cell, undergoes autoprocessing in cis mediated by the peptidase C80 domain (also named CPD domain): the protease activity is activated upon binding inositol hexakisphosphate (InsP6) present at the host cell membrane and delivers the Cysteine protease domain-containing toxin F3 chain to the host cytosol. The Cysteine protease domain-containing toxin F3 chain will then further cleave and release effector toxin chains that cause disassembly of the actin cytoskeleton and enhance V.cholerae colonization of the small intestine, possibly by facilitating evasion of phagocytic cells. In terms of biological role, following autocatalytic cleavage in cis at the Leu-3441-Ala-3442 site, this chain mediates processing in trans to release other individual toxin chains to the host cytosol. Released effector toxin chains cause disassembly of the actin cytoskeleton and enhance V.cholerae colonization of the small intestine, possibly by facilitating evasion of phagocytic cells. Actin-directed toxin that catalyzes the covalent cross-linking of host cytoplasmic monomeric actin. Mediates the cross-link between 'Lys-50' of one monomer and 'Glu-270' of another actin monomer, resulting in formation of highly toxic actin oligomers that cause cell rounding. The toxin can be highly efficient at very low concentrations by acting on formin homology family proteins: toxic actin oligomers bind with high affinity to formins and adversely affect both nucleation and elongation abilities of formins, causing their potent inhibition in both profilin-dependent and independent manners. Acts as an acid--amino-acid ligase that transfers the gamma-phosphoryl group of ATP to the 'Glu-270' actin residue, resulting in the formation of an activated acyl phosphate intermediate. This intermediate is further hydrolyzed and the energy of hydrolysis is utilized for the formation of the amide bond between actin subunits. Its function is as follows. N-epsilon-fatty acyltransferase that mediates lysine-palmitoylation of host Rho GTPase proteins, with a strong preference for host Rac1. After delivery to the host cytosol, localizes to the host cell membrane where it palmitoylates host Rho GTPase proteins, resulting in loss of all active GTP-bound Rho and subsequent actin depolymerization. Prenylation of host Rac1 at the C-terminus is required for lysine-palmitoylation. Functionally, indirectly activates the small GTPase CDC42. This Vibrio cholerae serotype O1 (strain ATCC 39315 / El Tor Inaba N16961) protein is Multifunctional-autoprocessing repeats-in-toxin.